The chain runs to 69 residues: Putative membrane protein insertion efficiency factor (69 aa).

The protein belongs to the UPF0161 family.

It is found in the cell membrane. In terms of biological role, could be involved in insertion of integral membrane proteins into the membrane. The sequence is that of Putative membrane protein insertion efficiency factor from Desulfitobacterium hafniense (strain Y51).